We begin with the raw amino-acid sequence, 445 residues long: Phosphoglucosamine mutase (445 aa).

The Phosphoserine intermediate role is filled by S102. Residues S102, D241, D243, and D245 each contribute to the Mg(2+) site. S102 is modified (phosphoserine).

It belongs to the phosphohexose mutase family. Requires Mg(2+) as cofactor. In terms of processing, activated by phosphorylation.

It catalyses the reaction alpha-D-glucosamine 1-phosphate = D-glucosamine 6-phosphate. Catalyzes the conversion of glucosamine-6-phosphate to glucosamine-1-phosphate. This is Phosphoglucosamine mutase from Escherichia coli O157:H7.